We begin with the raw amino-acid sequence, 754 residues long: Endoribonuclease Dicer-like (754 aa).

The PAZ domain maps to 132–251; sequence QLMCDAKRLS…LPPELCLLLP (120 aa). 2 consecutive RNase III domains span residues 298–418 and 613–734; these read FAIT…TGPN and AQTV…LACG. Positions 336, 404, 407, 649, 720, and 723 each coordinate Mn(2+).

As to quaternary structure, homodimer. Mg(2+) is required as a cofactor. Mn(2+) serves as cofactor.

Functionally, involved in cleaving double-stranded RNA in the RNA interference (RNAi) pathway. It produces 21 to 23 bp dsRNAs (siRNAs) which target the selective destruction of homologous RNAs. This Giardia intestinalis (strain ATCC 50803 / WB clone C6) (Giardia lamblia) protein is Endoribonuclease Dicer-like.